A 458-amino-acid chain; its full sequence is Phosphomethylpyrimidine synthase (458 aa).

Residues Asn80, Met109, Tyr139, His175, 195-197, 236-239, and Glu275 each bind substrate; these read SRG and DSLR. His279 contacts Zn(2+). Residue Tyr302 coordinates substrate. Zn(2+) is bound at residue His343. Residues Cys423, Cys426, and Cys431 each coordinate [4Fe-4S] cluster.

Belongs to the ThiC family. The cofactor is [4Fe-4S] cluster.

It catalyses the reaction 5-amino-1-(5-phospho-beta-D-ribosyl)imidazole + S-adenosyl-L-methionine = 4-amino-2-methyl-5-(phosphooxymethyl)pyrimidine + CO + 5'-deoxyadenosine + formate + L-methionine + 3 H(+). It functions in the pathway cofactor biosynthesis; thiamine diphosphate biosynthesis. In terms of biological role, catalyzes the synthesis of the hydroxymethylpyrimidine phosphate (HMP-P) moiety of thiamine from aminoimidazole ribotide (AIR) in a radical S-adenosyl-L-methionine (SAM)-dependent reaction. This chain is Phosphomethylpyrimidine synthase, found in Cyanothece sp. (strain PCC 7425 / ATCC 29141).